Consider the following 421-residue polypeptide: Zinc chaperone AztD (421 aa).

A signal peptide spans 1–29; the sequence is MMENIMKKRLLSTSISTLLLGLSVMPAFA. The Zn(2+) site is built by H101, H104, D106, H126, H169, H216, and H405. A disulfide bridge connects residues C212 and C229. The tract at residues 399 to 421 is disordered; sequence GGSGKVHGEHHDHEAHHHDDHAH. The span at 404-421 shows a compositional bias: basic and acidic residues; the sequence is VHGEHHDHEAHHHDDHAH. An N-terminal Zn(2+)-binding motif; binds a third Zn(2+) with low affinity motif is present at residues 408 to 419; that stretch reads HHDHEAHHHDDH.

Monomer.

It is found in the periplasm. Its function is as follows. Acts as a zinc chaperone in the AztABCD zinc transport system. Directly transfers one zinc cation to the solute binding protein AztC; the transfer occurs without the formation of a stable interaction. Binds 3 Zn(2+), two with high affinity and one with low affinity, and transfers only Zn(2+) bound to site 2 to AztC. This chain is Zinc chaperone AztD, found in Citrobacter koseri (strain ATCC BAA-895 / CDC 4225-83 / SGSC4696).